The following is a 466-amino-acid chain: Chromosomal replication initiator protein DnaA (466 aa).

The interval 1 to 86 (MSLSLWQQCL…EVGTKPVTQT (86 aa)) is domain I, interacts with DnaA modulators. The segment at 86-129 (TLKTPVHNVVAPTQTTTAQPQRVAPAARSGWDNVPAPAEPTYRS) is domain II. Residues 130–346 (NVNVKHTFDN…GALNRVIANA (217 aa)) are domain III, AAA+ region. ATP is bound by residues G174, G176, K177, and T178. The interval 347–466 (NFTGRAITID…FSNLIRTLSS (120 aa)) is domain IV, binds dsDNA.

This sequence belongs to the DnaA family. Oligomerizes as a right-handed, spiral filament on DNA at oriC.

The protein resides in the cytoplasm. Plays an essential role in the initiation and regulation of chromosomal replication. ATP-DnaA binds to the origin of replication (oriC) to initiate formation of the DNA replication initiation complex once per cell cycle. Binds the DnaA box (a 9 base pair repeat at the origin) and separates the double-stranded (ds)DNA. Forms a right-handed helical filament on oriC DNA; dsDNA binds to the exterior of the filament while single-stranded (ss)DNA is stabiized in the filament's interior. The ATP-DnaA-oriC complex binds and stabilizes one strand of the AT-rich DNA unwinding element (DUE), permitting loading of DNA polymerase. After initiation quickly degrades to an ADP-DnaA complex that is not apt for DNA replication. Binds acidic phospholipids. The sequence is that of Chromosomal replication initiator protein DnaA from Salmonella choleraesuis (strain SC-B67).